Reading from the N-terminus, the 427-residue chain is Mannosylglucosylglycerate synthase (427 aa).

It belongs to the glycosyltransferase group 1 family. Requires Co(2+) as cofactor. The cofactor is Mg(2+). Mn(2+) serves as cofactor. It depends on Ni(2+) as a cofactor.

It carries out the reaction (2R)-2-O-(alpha-D-glucopyranosyl)-glycerate + GDP-alpha-D-mannose = (2R)-2-O-[alpha-D-mannopyranosyl-(1-&gt;2)-alpha-D-glucopyranosyl]-glycerate + GDP + H(+). Functionally, catalyzes the synthesis of mannosylglucosylglycerate (MGG) from glucosylglycerate (GG) and GDP-mannose. This chain is Mannosylglucosylglycerate synthase, found in Thermotoga maritima (strain ATCC 43589 / DSM 3109 / JCM 10099 / NBRC 100826 / MSB8).